The following is a 487-amino-acid chain: Putative KilA-N domain-containing protein L37 (487 aa).

A compositionally biased stretch (basic residues) spans 1–12; the sequence is MKVQKSSKKPLK. The segment at 1–137 is disordered; sequence MKVQKSSKKP…DINSDDDNNL (137 aa). A compositionally biased stretch (low complexity) spans 22–34; it reads KSGSKSMKSSKSS. Composition is skewed to acidic residues over residues 47 to 77 and 111 to 136; these read DSEI…ESSD and VLDD…DDNN. Residues 175–284 enclose the KilA-N domain; it reads EISKGIYGTF…HKVSKIVNDY (110 aa). Residues 290–338 are a coiled coil; that stretch reads FDKHEQLIKGKDDKIAELTRKIDKQTSLMKDQKSTIKEQDKKINELLSK.

This chain is Putative KilA-N domain-containing protein L37, found in Acanthamoeba polyphaga mimivirus (APMV).